The primary structure comprises 342 residues: UDP-N-acetylenolpyruvoylglucosamine reductase (342 aa).

The FAD-binding PCMH-type domain maps to 13–183; sequence IDHNAQHIVC…VAVGLRLPKE (171 aa). Arg159 is an active-site residue. Substrate is bound at residue Tyr190. Ser229 acts as the Proton donor in catalysis. Glu325 is an active-site residue.

It belongs to the MurB family. Monomer. It depends on FAD as a cofactor.

The protein localises to the cytoplasm. The catalysed reaction is UDP-N-acetyl-alpha-D-muramate + NADP(+) = UDP-N-acetyl-3-O-(1-carboxyvinyl)-alpha-D-glucosamine + NADPH + H(+). Its pathway is cell wall biogenesis; peptidoglycan biosynthesis. Functionally, cell wall formation. The protein is UDP-N-acetylenolpyruvoylglucosamine reductase (murB) of Escherichia coli (strain K12).